The primary structure comprises 278 residues: Heat stress transcription factor C-2b (278 aa).

Residues Ala105–Gly114 show a composition bias toward gly residues. The interval Ala105–Asp132 is disordered. The segment at Leu143 to Val179 is hydrophobic repeat HR-A/B. The short motif at Lys219–Arg222 is the Nuclear localization signal element.

This sequence belongs to the HSF family. Class C subfamily. As to quaternary structure, homotrimer. In terms of processing, exhibits temperature-dependent phosphorylation.

The protein localises to the nucleus. Transcriptional regulator that specifically binds DNA of heat shock promoter elements (HSE). This is Heat stress transcription factor C-2b (HSFC2B) from Oryza sativa subsp. japonica (Rice).